The chain runs to 293 residues: 4-hydroxybenzoate octaprenyltransferase (293 aa).

A run of 8 helical transmembrane segments spans residues 26 to 46 (IGTLLLLWPCLMALLFAAKGM), 49 to 69 (IKVLLIFILGVVIMRACGCII), 102 to 122 (LFALLGLLAFALVLLLNPLVV), 148 to 168 (FLGIVWSWSIPMAYAAQLGEV), 173 to 193 (WWLFAANWCWTVAYDTMYAMI), 217 to 237 (WIAVFQLMAFGCFLMAGLSAE), 240 to 260 (FIYALGLLGFIAFSVYQQRLI), and 272 to 292 (FLNNNWVGMLLFLTLAADYLL).

This sequence belongs to the UbiA prenyltransferase family. The cofactor is Mg(2+).

It is found in the cell inner membrane. It catalyses the reaction all-trans-octaprenyl diphosphate + 4-hydroxybenzoate = 4-hydroxy-3-(all-trans-octaprenyl)benzoate + diphosphate. Its pathway is cofactor biosynthesis; ubiquinone biosynthesis. In terms of biological role, catalyzes the prenylation of para-hydroxybenzoate (PHB) with an all-trans polyprenyl group. Mediates the second step in the final reaction sequence of ubiquinone-8 (UQ-8) biosynthesis, which is the condensation of the polyisoprenoid side chain with PHB, generating the first membrane-bound Q intermediate 3-octaprenyl-4-hydroxybenzoate. The chain is 4-hydroxybenzoate octaprenyltransferase from Shewanella denitrificans (strain OS217 / ATCC BAA-1090 / DSM 15013).